A 633-amino-acid polypeptide reads, in one-letter code: Opioid growth factor receptor (633 aa).

At M1 the chain carries N-acetylmethionine. Acidic residues predominate over residues 1–38 (MDDPECDSTWEDESEEDGEDGQADDTTDEDTGDDDGDA). Residues 1–44 (MDDPECDSTWEDESEEDGEDGQADDTTDEDTGDDDGDAEEARPS) form a disordered region. The Bipartite nuclear localization signal motif lies at 257–286 (RRELVHFAWEHFKPRREFVWGPRDKLRRFR). The interval 287-390 (PQTISRPLMG…EPDPQGVSEV (104 aa)) is disordered. Phosphoserine occurs at positions 327, 340, 361, 365, 403, and 452. Over residues 351-374 (GDQRHEAKSPSPKESKKRKLEGNR) the composition is skewed to basic and acidic residues. The tract at residues 404–633 (PTSQEPREAE…IEASVEPPKP (230 aa)) is disordered. A compositionally biased stretch (polar residues) spans 441-455 (ASNTQVQASALSPTP). 14 repeat units span residues 467 to 475 (GPEDPKSQV), 476 to 484 (GPEDPKSQV), 485 to 493 (GPEDPKSQV), 494 to 502 (GPEDPKSQV), 503 to 511 (GPEDPKGQV), 512 to 520 (EPEDPKGQV), 521 to 529 (GPEDPKGQV), 530 to 538 (GPEDPKGQV), 539 to 547 (GPEDPKSQV), 548 to 556 (GPEDPKSQV), 557 to 565 (EPEDPKSQV), 566 to 574 (EPEDPKSQV), 575 to 583 (EPEDPKSQV), and 584 to 592 (GPEDPQSQV). The tract at residues 467 to 592 (GPEDPKSQVG…VGPEDPQSQV (126 aa)) is 14 X approximate tandem repeats. The span at 505–517 (EDPKGQVEPEDPK) shows a compositional bias: basic and acidic residues. Basic and acidic residues predominate over residues 550–580 (EDPKSQVEPEDPKSQVEPEDPKSQVEPEDPK). 2 positions are modified to phosphoserine: S601 and S608.

The protein belongs to the opioid growth factor receptor family. In terms of tissue distribution, expressed in all tissues examined, including brain, heart, lung, liver, kidney and skeletal muscle.

The protein resides in the cytoplasm. It localises to the nucleus. Its function is as follows. Receptor for opioid growth factor (OGF), also known as Met-enkephalin. Seems to be involved in growth regulation. In Mus musculus (Mouse), this protein is Opioid growth factor receptor (Ogfr).